Here is a 342-residue protein sequence, read N- to C-terminus: Holliday junction branch migration complex subunit RuvB (342 aa).

Residues 1–181 (MEERFLTPKD…FGMVLELEFY (181 aa)) are large ATPase domain (RuvB-L). ATP is bound by residues L20, R21, G62, K65, T66, T67, 128-130 (EDF), R171, Y181, and R218. Position 66 (T66) interacts with Mg(2+). Residues 182–252 (TPDELKQIIK…TVEDAMKIMG (71 aa)) form a small ATPAse domain (RuvB-S) region. The head domain (RuvB-H) stretch occupies residues 255–342 (AEGLDDMDRK…IGPLWDSTGD (88 aa)). DNA-binding residues include R310 and R315.

The protein belongs to the RuvB family. Homohexamer. Forms an RuvA(8)-RuvB(12)-Holliday junction (HJ) complex. HJ DNA is sandwiched between 2 RuvA tetramers; dsDNA enters through RuvA and exits via RuvB. An RuvB hexamer assembles on each DNA strand where it exits the tetramer. Each RuvB hexamer is contacted by two RuvA subunits (via domain III) on 2 adjacent RuvB subunits; this complex drives branch migration. In the full resolvosome a probable DNA-RuvA(4)-RuvB(12)-RuvC(2) complex forms which resolves the HJ.

It is found in the cytoplasm. It carries out the reaction ATP + H2O = ADP + phosphate + H(+). The RuvA-RuvB-RuvC complex processes Holliday junction (HJ) DNA during genetic recombination and DNA repair, while the RuvA-RuvB complex plays an important role in the rescue of blocked DNA replication forks via replication fork reversal (RFR). RuvA specifically binds to HJ cruciform DNA, conferring on it an open structure. The RuvB hexamer acts as an ATP-dependent pump, pulling dsDNA into and through the RuvAB complex. RuvB forms 2 homohexamers on either side of HJ DNA bound by 1 or 2 RuvA tetramers; 4 subunits per hexamer contact DNA at a time. Coordinated motions by a converter formed by DNA-disengaged RuvB subunits stimulates ATP hydrolysis and nucleotide exchange. Immobilization of the converter enables RuvB to convert the ATP-contained energy into a lever motion, pulling 2 nucleotides of DNA out of the RuvA tetramer per ATP hydrolyzed, thus driving DNA branch migration. The RuvB motors rotate together with the DNA substrate, which together with the progressing nucleotide cycle form the mechanistic basis for DNA recombination by continuous HJ branch migration. Branch migration allows RuvC to scan DNA until it finds its consensus sequence, where it cleaves and resolves cruciform DNA. This chain is Holliday junction branch migration complex subunit RuvB, found in Kosmotoga olearia (strain ATCC BAA-1733 / DSM 21960 / TBF 19.5.1).